The chain runs to 130 residues: S-adenosylmethionine decarboxylase proenzyme (130 aa).

Ser63 (schiff-base intermediate with substrate; via pyruvic acid) is an active-site residue. Ser63 is modified (pyruvic acid (Ser); by autocatalysis). Catalysis depends on His68, which acts as the Proton acceptor; for processing activity. Cys83 acts as the Proton donor; for catalytic activity in catalysis.

This sequence belongs to the prokaryotic AdoMetDC family. Type 1 subfamily. In terms of assembly, heterotetramer of two alpha and two beta chains arranged as a dimer of alpha/beta heterodimers. The cofactor is pyruvate. Post-translationally, is synthesized initially as an inactive proenzyme. Formation of the active enzyme involves a self-maturation process in which the active site pyruvoyl group is generated from an internal serine residue via an autocatalytic post-translational modification. Two non-identical subunits are generated from the proenzyme in this reaction, and the pyruvate is formed at the N-terminus of the alpha chain, which is derived from the carboxyl end of the proenzyme. The post-translation cleavage follows an unusual pathway, termed non-hydrolytic serinolysis, in which the side chain hydroxyl group of the serine supplies its oxygen atom to form the C-terminus of the beta chain, while the remainder of the serine residue undergoes an oxidative deamination to produce ammonia and the pyruvoyl group blocking the N-terminus of the alpha chain.

The catalysed reaction is S-adenosyl-L-methionine + H(+) = S-adenosyl 3-(methylsulfanyl)propylamine + CO2. It participates in amine and polyamine biosynthesis; S-adenosylmethioninamine biosynthesis; S-adenosylmethioninamine from S-adenosyl-L-methionine: step 1/1. In terms of biological role, catalyzes the decarboxylation of S-adenosylmethionine to S-adenosylmethioninamine (dcAdoMet), the propylamine donor required for the synthesis of the polyamines spermine and spermidine from the diamine putrescine. The sequence is that of S-adenosylmethionine decarboxylase proenzyme from Thermotoga petrophila (strain ATCC BAA-488 / DSM 13995 / JCM 10881 / RKU-1).